The chain runs to 627 residues: Xaa-Pro aminopeptidase 1 (627 aa).

R88 and H405 together coordinate a peptide. The Mn(2+) site is built by D424, D435, and H498. Residues H498, H507, and E533 each coordinate a peptide. The Mn(2+) site is built by E533 and E547.

Belongs to the peptidase M24B family. Homodimer. Mn(2+) serves as cofactor.

The protein resides in the cytoplasm. Its subcellular location is the cytosol. It carries out the reaction Release of any N-terminal amino acid, including proline, that is linked to proline, even from a dipeptide or tripeptide.. Functionally, metalloaminopeptidase that catalyzes the removal of a penultimate prolyl residue from the N-termini of peptides, such as Arg-Pro-Pro. This is Xaa-Pro aminopeptidase 1 (xpnpep1) from Dictyostelium discoideum (Social amoeba).